The primary structure comprises 330 residues: Malate dehydrogenase (330 aa).

13-19 serves as a coordination point for NAD(+); that stretch reads GAAGQIG. 2 residues coordinate substrate: Arg94 and Arg100. NAD(+) is bound by residues Asn107, Gln114, and 131 to 133; that span reads VGN. Residues Asn133 and Arg164 each contribute to the substrate site. The active-site Proton acceptor is the His189.

This sequence belongs to the LDH/MDH superfamily. MDH type 2 family.

The enzyme catalyses (S)-malate + NAD(+) = oxaloacetate + NADH + H(+). Catalyzes the reversible oxidation of malate to oxaloacetate. The protein is Malate dehydrogenase of Deinococcus radiodurans (strain ATCC 13939 / DSM 20539 / JCM 16871 / CCUG 27074 / LMG 4051 / NBRC 15346 / NCIMB 9279 / VKM B-1422 / R1).